A 450-amino-acid chain; its full sequence is Nicotinamide phosphoribosyltransferase (450 aa).

A diphosphate-binding site is contributed by Arg-210. Asp-233 lines the beta-nicotinamide D-ribonucleotide pocket. Positions 249 and 310 each coordinate diphosphate. Residues 310-312 (RAD), 364-365 (GD), and Arg-403 contribute to the beta-nicotinamide D-ribonucleotide site.

The protein belongs to the NAPRTase family.

The catalysed reaction is beta-nicotinamide D-ribonucleotide + diphosphate = 5-phospho-alpha-D-ribose 1-diphosphate + nicotinamide + H(+). The protein operates within cofactor biosynthesis; NAD(+) biosynthesis; nicotinamide D-ribonucleotide from 5-phospho-alpha-D-ribose 1-diphosphate and nicotinamide: step 1/1. Functionally, catalyzes the condensation of nicotinamide with 5-phosphoribosyl-1-pyrophosphate to yield nicotinamide mononucleotide, an intermediate in the biosynthesis of NAD. This chain is Nicotinamide phosphoribosyltransferase, found in Mycoplasma genitalium (strain ATCC 33530 / DSM 19775 / NCTC 10195 / G37) (Mycoplasmoides genitalium).